The chain runs to 251 residues: Hydroxyacylglutathione hydrolase (251 aa).

The Zn(2+) site is built by histidine 53, histidine 55, aspartate 57, histidine 58, histidine 110, aspartate 127, and histidine 165.

The protein belongs to the metallo-beta-lactamase superfamily. Glyoxalase II family. Monomer. It depends on Zn(2+) as a cofactor.

The catalysed reaction is an S-(2-hydroxyacyl)glutathione + H2O = a 2-hydroxy carboxylate + glutathione + H(+). The protein operates within secondary metabolite metabolism; methylglyoxal degradation; (R)-lactate from methylglyoxal: step 2/2. In terms of biological role, thiolesterase that catalyzes the hydrolysis of S-D-lactoyl-glutathione to form glutathione and D-lactic acid. The protein is Hydroxyacylglutathione hydrolase of Escherichia coli (strain SE11).